A 185-amino-acid polypeptide reads, in one-letter code: Erythropoietin (185 aa).

The signal sequence occupies residues 1–22; that stretch reads MLQKRGRGLLVLLLMLLEWTRP. Intrachain disulfides connect Cys32–Cys180 and Cys54–Cys58.

Belongs to the EPO/TPO family.

Its subcellular location is the secreted. Erythropoietin is the principal hormone involved in the regulation of erythrocyte differentiation and the maintenance of a physiological level of circulating erythrocyte mass. This chain is Erythropoietin (epo), found in Epinephelus coioides (Orange-spotted grouper).